The following is an 822-amino-acid chain: ATP-dependent zinc metalloprotease FtsH (822 aa).

Residues 1 to 76 are Cytoplasmic-facing; it reads MEFNKLELLI…NQKEPGKARK (76 aa). Residues 44–54 are compositionally biased toward polar residues; sequence SLDQPSDAPSN. Positions 44–71 are disordered; the sequence is SLDQPSDAPSNNKKRNLDQPDNPNQKEP. A helical membrane pass occupies residues 77–97; that stretch reads IIWSFIIIILVLGVLALIILS. Over 98–251 the chain is Extracellular; that stretch reads GFSFSATSLN…QSMSLPTSYS (154 aa). A helical transmembrane segment spans residues 252–272; the sequence is FYTAASLVLSILPFILLIGII. At 273 to 822 the chain is on the cytoplasmic side; sequence YYSMRKMGQA…SKESSSDKKK (550 aa). Position 347–354 (347–354) interacts with ATP; the sequence is GPPGTGKT. Zn(2+) is bound at residue histidine 569. Glutamate 570 is an active-site residue. Residues histidine 573 and aspartate 648 each contribute to the Zn(2+) site. Residues 758–794 are compositionally biased toward basic and acidic residues; that stretch reads KKELEEKKKAEDLIRKAKKESEASSKEEKEMDVEKKV. Residues 758-822 form a disordered region; sequence KKELEEKKKA…SKESSSDKKK (65 aa). The segment covering 796–805 has biased composition (low complexity); it reads KPSASSTEPT. Positions 812–822 are enriched in basic and acidic residues; the sequence is PSKESSSDKKK.

In the central section; belongs to the AAA ATPase family. The protein in the C-terminal section; belongs to the peptidase M41 family. Homohexamer. Zn(2+) serves as cofactor.

It localises to the cell membrane. In terms of biological role, acts as a processive, ATP-dependent zinc metallopeptidase for both cytoplasmic and membrane proteins. Plays a role in the quality control of integral membrane proteins. This is ATP-dependent zinc metalloprotease FtsH from Malacoplasma penetrans (strain HF-2) (Mycoplasma penetrans).